We begin with the raw amino-acid sequence, 183 residues long: Outer membrane protein H.8 (183 aa).

The signal sequence occupies residues Met1 to Ala17. Residue Cys18 is the site of N-palmitoyl cysteine attachment. Cys18 carries S-diacylglycerol cysteine lipidation. The interval Ala27 to Ala51 is disordered. The Plastocyanin-like domain maps to Gly57 to Asp183. Cu cation is bound by residues His102, Cys166, His171, and Met175.

It depends on Cu cation as a cofactor.

The protein resides in the cell outer membrane. The chain is Outer membrane protein H.8 from Neisseria meningitidis serogroup C / serotype 2a (strain ATCC 700532 / DSM 15464 / FAM18).